The primary structure comprises 60 residues: Putative potassium channel blocker TXKS1 (60 aa).

An N-terminal signal peptide occupies residues 1-28 (MNRLTTIILMLIVINVIMDDISESKVAA). Cystine bridges form between cysteine 32-cysteine 49, cysteine 35-cysteine 55, and cysteine 39-cysteine 57. Lysine 59 bears the Lysine amide mark.

Expressed by the venom gland.

The protein localises to the secreted. In terms of biological role, inhibits potassium channels. In Olivierus martensii (Manchurian scorpion), this protein is Putative potassium channel blocker TXKS1.